A 223-amino-acid polypeptide reads, in one-letter code: Type III pantothenate kinase (223 aa).

An ATP-binding site is contributed by 17 to 24 (DIGNTHIH). Residues Tyr-81 and 85-88 (GIDR) contribute to the substrate site. The active-site Proton acceptor is Asp-87. Residue Asp-102 participates in K(+) binding. Ser-105 provides a ligand contact to ATP. Thr-157 is a substrate binding site.

It belongs to the type III pantothenate kinase family. In terms of assembly, homodimer. It depends on NH4(+) as a cofactor. K(+) is required as a cofactor.

It localises to the cytoplasm. It catalyses the reaction (R)-pantothenate + ATP = (R)-4'-phosphopantothenate + ADP + H(+). It functions in the pathway cofactor biosynthesis; coenzyme A biosynthesis; CoA from (R)-pantothenate: step 1/5. In terms of biological role, catalyzes the phosphorylation of pantothenate (Pan), the first step in CoA biosynthesis. In Helicobacter pylori (strain HPAG1), this protein is Type III pantothenate kinase.